Reading from the N-terminus, the 240-residue chain is MKRPSGRVADQLRSIRITRNYTKHAEGSVLVEFGDTKVICTVSVENGVPRFLKGQGQGWLTAEYGMLPRSTGERNQREASRGKQGGRTLEIQRLIGRSLRAALDMSKLGDITLYVDCDVIQADGGTRTASITGAMVALCDALAVIKKRGGLKGGNPLKHMIAAVSVGMYQGEAVLDLDYLEDSAAETDLNVVMTSAGGFIEVQGTAEGAPFQPEDFNAMLALAQKGMNEIFELQQAALAD.

Phosphate contacts are provided by residues Arg87 and 125-127 (GTR).

It belongs to the RNase PH family. As to quaternary structure, homohexameric ring arranged as a trimer of dimers.

It catalyses the reaction tRNA(n+1) + phosphate = tRNA(n) + a ribonucleoside 5'-diphosphate. In terms of biological role, phosphorolytic 3'-5' exoribonuclease that plays an important role in tRNA 3'-end maturation. Removes nucleotide residues following the 3'-CCA terminus of tRNAs; can also add nucleotides to the ends of RNA molecules by using nucleoside diphosphates as substrates, but this may not be physiologically important. Probably plays a role in initiation of 16S rRNA degradation (leading to ribosome degradation) during starvation. In Pseudomonas putida (strain ATCC 47054 / DSM 6125 / CFBP 8728 / NCIMB 11950 / KT2440), this protein is Ribonuclease PH.